A 270-amino-acid chain; its full sequence is Monofunctional glycosyltransferase (270 aa).

A disordered region spans residues 1 to 35; the sequence is MKRSDRYKTYNKPNDSNDSNQLHHNTYFKPVNKPQ. Residues 11–24 show a composition bias toward polar residues; the sequence is NKPNDSNDSNQLHH. Residues 47–67 traverse the membrane as a helical segment; it reads LLIPILIIIGIIIGVMYALSL.

It belongs to the glycosyltransferase 51 family.

The protein localises to the cell membrane. The catalysed reaction is [GlcNAc-(1-&gt;4)-Mur2Ac(oyl-L-Ala-gamma-D-Glu-L-Lys-D-Ala-D-Ala)](n)-di-trans,octa-cis-undecaprenyl diphosphate + beta-D-GlcNAc-(1-&gt;4)-Mur2Ac(oyl-L-Ala-gamma-D-Glu-L-Lys-D-Ala-D-Ala)-di-trans,octa-cis-undecaprenyl diphosphate = [GlcNAc-(1-&gt;4)-Mur2Ac(oyl-L-Ala-gamma-D-Glu-L-Lys-D-Ala-D-Ala)](n+1)-di-trans,octa-cis-undecaprenyl diphosphate + di-trans,octa-cis-undecaprenyl diphosphate + H(+). The protein operates within cell wall biogenesis; peptidoglycan biosynthesis. Its function is as follows. Peptidoglycan polymerase that catalyzes glycan chain elongation using lipid-linked disaccharide-pentapeptide as the substrate. The sequence is that of Monofunctional glycosyltransferase from Staphylococcus saprophyticus subsp. saprophyticus (strain ATCC 15305 / DSM 20229 / NCIMB 8711 / NCTC 7292 / S-41).